The following is a 435-amino-acid chain: Matrix remodeling-associated protein 8 (435 aa).

The N-terminal stretch at 1-22 (MEIRCKVLVCHIILLHSATVYL) is a signal peptide. The Extracellular segment spans residues 23 to 337 (YSVPASQQNP…QESRLHFFQQ (315 aa)). Ig-like V-type domains follow at residues 32–158 (PESV…LNIT) and 156–293 (NITK…LSVS). 5 N-linked (GlcNAc...) asparagine glycosylation sites follow: Asn41, Asn120, Asn156, Asn245, and Asn324. Cys54 and Cys138 are joined by a disulfide. A disulfide bridge connects residues Cys187 and Cys273. The chain crosses the membrane as a helical span at residues 338-358 (LGYILATLLLFILLLTAVILI). Residues 359-435 (TRKHQKRGYA…DLELRKEYCK (77 aa)) lie on the Cytoplasmic side of the membrane.

Homodimer in cis. Does not appear to form trans-homodimers.

It is found in the cell membrane. Transmembrane protein which can modulate activity of various signaling pathways, probably via binding to integrin ITGAV:ITGB3. Mediates heterophilic cell-cell interactions in vitro. This chain is Matrix remodeling-associated protein 8 (mxra8), found in Xenopus laevis (African clawed frog).